The following is a 523-amino-acid chain: 2-isopropylmalate synthase (523 aa).

In terms of domain architecture, Pyruvate carboxyltransferase spans 5–267; it reads VIIFDTTLRD…HTNINHHEIW (263 aa). Positions 14, 202, 204, and 238 each coordinate Mn(2+). A regulatory domain region spans residues 392–523; it reads RLDYFSVQSG…QNKENNKETV (132 aa).

It belongs to the alpha-IPM synthase/homocitrate synthase family. LeuA type 1 subfamily. As to quaternary structure, homodimer. Requires Mn(2+) as cofactor.

Its subcellular location is the cytoplasm. It carries out the reaction 3-methyl-2-oxobutanoate + acetyl-CoA + H2O = (2S)-2-isopropylmalate + CoA + H(+). The protein operates within amino-acid biosynthesis; L-leucine biosynthesis; L-leucine from 3-methyl-2-oxobutanoate: step 1/4. In terms of biological role, catalyzes the condensation of the acetyl group of acetyl-CoA with 3-methyl-2-oxobutanoate (2-ketoisovalerate) to form 3-carboxy-3-hydroxy-4-methylpentanoate (2-isopropylmalate). This chain is 2-isopropylmalate synthase, found in Salmonella choleraesuis (strain SC-B67).